A 409-amino-acid polypeptide reads, in one-letter code: Mitochondrial import inner membrane translocase subunit TIM50-B (409 aa).

The N-terminal 42 residues, 1 to 42 (MSLIAIERVLCGWPKICRKLIVTSRSLTSGLRRALVKQPRKG), are a transit peptide targeting the mitochondrion. The Mitochondrial matrix portion of the chain corresponds to 43 to 127 (GDVGKPGMEL…ELERAFRRMK (85 aa)). Positions 93–114 (PQTSEESNDEESRERRKLEEEE) are disordered. Over residues 102 to 111 (EESRERRKLE) the composition is skewed to basic and acidic residues. The chain crosses the membrane as a helical span at residues 128-148 (LGFGLFGIGSMLFSFWAIYFY). Residues 149 to 409 (GRPSLDEHGN…KNWTRGFINH (261 aa)) lie on the Mitochondrial intermembrane side of the membrane. The 144-residue stretch at 205 to 348 (YVQPPYTLVL…FELTSFLSVL (144 aa)) folds into the FCP1 homology domain.

The protein belongs to the TIM50 family. As to quaternary structure, component of the TIM23 complex at least composed of Tim23, Tim17 (Tim17a1, Tim17a2 or Tim17b1) and a Tim50. As to expression, exclusively expressed in the testis.

The protein resides in the mitochondrion inner membrane. Functionally, essential component of the TIM23 complex, a complex that mediates the translocation of transit peptide-containing proteins across the mitochondrial inner membrane. In Drosophila melanogaster (Fruit fly), this protein is Mitochondrial import inner membrane translocase subunit TIM50-B (ttm2).